A 370-amino-acid chain; its full sequence is TD and POZ domain-containing protein 4 (370 aa).

In terms of domain architecture, MATH spans 19 to 149 (KLCYRWTISN…DDKFTLLCKV (131 aa)). The region spanning 188 to 251 (TDCSLLVAGH…MMGFIYTGKV (64 aa)) is the BTB domain.

The protein belongs to the Tdpoz family.

The sequence is that of TD and POZ domain-containing protein 4 from Mus musculus (Mouse).